A 90-amino-acid chain; its full sequence is Mitochondrial import inner membrane translocase subunit tim10 (90 aa).

The Twin CX3C motif motif lies at 36 to 61 (CTLKCIDKSYREGDLSKGESVCLDRC). 2 disulfide bridges follow: C36/C61 and C40/C57.

This sequence belongs to the small Tim family. Heterohexamer; composed of 3 copies of tim9 and 3 copies of tim10, named soluble 70 kDa complex. Associates directly with the TIM22 complex, whose core is composed of tim22 and tim54. Interacts with the transmembrane regions of multi-pass transmembrane proteins in transit.

It is found in the mitochondrion inner membrane. In terms of biological role, mitochondrial intermembrane chaperone that participates in the import and insertion of multi-pass transmembrane proteins into the mitochondrial inner membrane. Also required for the transfer of beta-barrel precursors from the TOM complex to the sorting and assembly machinery (SAM complex) of the outer membrane. Acts as a chaperone-like protein that protects the hydrophobic precursors from aggregation and guide them through the mitochondrial intermembrane space. In Neurospora crassa (strain ATCC 24698 / 74-OR23-1A / CBS 708.71 / DSM 1257 / FGSC 987), this protein is Mitochondrial import inner membrane translocase subunit tim10 (tim10).